Reading from the N-terminus, the 333-residue chain is Porphobilinogen deaminase (333 aa).

Cysteine 255 bears the S-(dipyrrolylmethanemethyl)cysteine mark.

Belongs to the HMBS family. Monomer. The cofactor is dipyrromethane.

It carries out the reaction 4 porphobilinogen + H2O = hydroxymethylbilane + 4 NH4(+). The protein operates within porphyrin-containing compound metabolism; protoporphyrin-IX biosynthesis; coproporphyrinogen-III from 5-aminolevulinate: step 2/4. Tetrapolymerization of the monopyrrole PBG into the hydroxymethylbilane pre-uroporphyrinogen in several discrete steps. This Burkholderia vietnamiensis (strain G4 / LMG 22486) (Burkholderia cepacia (strain R1808)) protein is Porphobilinogen deaminase.